The following is a 210-amino-acid chain: uncharacterized protein (210 aa).

Helical transmembrane passes span 42-62, 66-86, 126-146, 147-167, and 189-209; these read ITLGIAFWGMLSMLGLAVLFV, ALHGVIMLLGGSYLAYLGFLM, VVVYFSSVMSLVLVNITEMWQ, IILAFAVIVVETFCYFYVISL, and AGIVFLFFGCVLVYNGINEII.

It belongs to the Rht family.

The protein resides in the cell membrane. This is an uncharacterized protein from Haemophilus influenzae (strain ATCC 51907 / DSM 11121 / KW20 / Rd).